The chain runs to 187 residues: UPF0301 protein YPO0936/y3322/YP_3506 (187 aa).

The protein belongs to the UPF0301 (AlgH) family.

The chain is UPF0301 protein YPO0936/y3322/YP_3506 from Yersinia pestis.